We begin with the raw amino-acid sequence, 1097 residues long: Apolipoprotein B receptor (1097 aa).

Disordered stretches follow at residues 64 to 249 (QEDL…KGEE), 262 to 376 (AWGT…WTTS), 410 to 739 (EEEG…SRRG), 789 to 866 (GWDS…ARAE), and 889 to 1097 (VGWQ…PKPQ). Basic and acidic residues-rich tracts occupy residues 83-92 (GPGDDRRHEV), 158-177 (ERQE…RSWE), and 185-208 (VRAR…ETEG). Over residues 209 to 218 (KAGAVGPKAA) the composition is skewed to low complexity. Basic and acidic residues-rich tracts occupy residues 219–232 (GDNR…READ) and 279–302 (GREE…EEAR). Over residues 312–330 (TASGGEEAETASGGEEAGT) the composition is skewed to low complexity. Over residues 331-362 (ASGGEEAGIASGGEAGTASGGEEAGTASGGEE) the composition is skewed to gly residues. Ser458 is modified (phosphoserine). Composition is skewed to basic and acidic residues over residues 463 to 487 (VDLR…RMEE) and 496 to 505 (EERGSSRDPV). Position 510 is a phosphoserine (Ser510). The residue at position 572 (Thr572) is a Phosphothreonine. Ser594 is modified (phosphoserine). Composition is skewed to basic and acidic residues over residues 594–606 (SKEE…EAGP) and 626–637 (NRTRKDMERGNT). Residues 640–652 (DAADGEQREEEET) are compositionally biased toward acidic residues. 3 stretches are compositionally biased toward basic and acidic residues: residues 791–800 (DSKEKEEAAA), 892–918 (QERE…RLLD), and 928–950 (RRAE…EEQP). Over residues 1000–1017 (SRVHLSRSSSQRRSRPSF) the composition is skewed to basic residues. Positions 1041–1050 (APEQRPLQLE) are enriched in low complexity.

As to quaternary structure, homodimer. Post-translationally, there are 2 forms in macrophages, the membrane-binding proteins 200 kDa (MBP 200) and 235 kDa (MBP 235), that can be reduced into a single active ligand-binding species with intermediate mobility (MBP 200R). As to expression, expressed in peripheral blood leukocytes &gt; bone marrow = spleen &gt; lymph node, and only faintly visible in appendix and thymus. Expressed in the brain, heart, kidney, liver, lung, pancreas, and placenta. Expressed primarily by reticuloendothelial cells: monocytes, macrophages, and endothelial cells. Expressed in atherosclerotic lesion foam cells.

It localises to the cell membrane. Macrophage receptor that binds to the apolipoprotein B48 (APOB) of dietary triglyceride (TG)-rich lipoproteins (TRL) or to a like domain of APOB in hypertriglyceridemic very low density lipoprotein (HTG-VLDL). Binds and internalizes TRL when out of the context of the macrophage. May provide essential lipids to reticuloendothelial cells. Could also be involved in foam cell formation with elevated TRL and remnant lipoprotein (RLP). Mediates the rapid high-affinity uptake of chylomicrons (CM), HTG-VLDL, and trypsinized (tryp) VLDL devoid of APOE in vitro in macrophages. This Homo sapiens (Human) protein is Apolipoprotein B receptor.